The sequence spans 202 residues: Precorrin-2 dehydrogenase (202 aa).

NAD(+) is bound by residues 20-21 and 41-42; these read TI and PT.

This sequence belongs to the precorrin-2 dehydrogenase / sirohydrochlorin ferrochelatase family. As to quaternary structure, homodimer.

The catalysed reaction is precorrin-2 + NAD(+) = sirohydrochlorin + NADH + 2 H(+). The protein operates within cofactor biosynthesis; adenosylcobalamin biosynthesis; sirohydrochlorin from precorrin-2: step 1/1. Its pathway is porphyrin-containing compound metabolism; siroheme biosynthesis; sirohydrochlorin from precorrin-2: step 1/1. In terms of biological role, catalyzes the dehydrogenation of precorrin-2 to form sirohydrochlorin which is used as a precursor in both siroheme biosynthesis and in the anaerobic branch of adenosylcobalamin biosynthesis. It is unable to oxidize precorrin-3. This is Precorrin-2 dehydrogenase (sirC) from Priestia megaterium (Bacillus megaterium).